The chain runs to 124 residues: Fluoride-specific ion channel FluC (124 aa).

4 helical membrane passes run 4 to 24, 35 to 55, 60 to 80, and 102 to 122; these read LLLV…ISIF, FGTL…YALG, ISPE…TTFS, and VVLN…LVFS. Residues G74 and T77 each coordinate Na(+).

This sequence belongs to the fluoride channel Fluc/FEX (TC 1.A.43) family.

The protein localises to the cell inner membrane. It carries out the reaction fluoride(in) = fluoride(out). With respect to regulation, na(+) is not transported, but it plays an essential structural role and its presence is essential for fluoride channel function. In terms of biological role, fluoride-specific ion channel. Important for reducing fluoride concentration in the cell, thus reducing its toxicity. This Shewanella sp. (strain ANA-3) protein is Fluoride-specific ion channel FluC.